We begin with the raw amino-acid sequence, 59 residues long: Protein translocase subunit SecE (59 aa).

Residues 35–55 (IVAIGIAIIGVVGFIIVLIGE) traverse the membrane as a helical segment.

The protein belongs to the SecE/SEC61-gamma family. In terms of assembly, component of the Sec protein translocase complex. Heterotrimer consisting of SecY (alpha), SecG (beta) and SecE (gamma) subunits. The heterotrimers can form oligomers, although 1 heterotrimer is thought to be able to translocate proteins. Interacts with the ribosome. May interact with SecDF, and other proteins may be involved.

The protein localises to the cell membrane. Its function is as follows. Essential subunit of the Sec protein translocation channel SecYEG. Clamps together the 2 halves of SecY. May contact the channel plug during translocation. The chain is Protein translocase subunit SecE from Methanobrevibacter smithii (strain ATCC 35061 / DSM 861 / OCM 144 / PS).